Consider the following 598-residue polypeptide: Jacalin-related lectin 17 (598 aa).

The tract at residues 1 to 23 (MAQRLEAEGNKNFKGKSKWDDGS) is disordered. 4 Jacalin-type lectin domains span residues 2-148 (AQRL…YVTW), 151-293 (PTKL…YFTT), 295-445 (PFTK…HFCP), and 452-595 (GEKV…HVLP).

It belongs to the jacalin lectin family.

This is Jacalin-related lectin 17 (JAL17) from Arabidopsis thaliana (Mouse-ear cress).